The chain runs to 297 residues: Formamidopyrimidine-DNA glycosylase (297 aa).

The active-site Schiff-base intermediate with DNA is the Pro-2. The active-site Proton donor is the Glu-3. The Proton donor; for beta-elimination activity role is filled by Lys-61. 2 residues coordinate DNA: Arg-120 and Arg-176. The FPG-type zinc-finger motif lies at 262–296 (HVYGRQGQPCDRCGTAIVRESFMNRGSHFCPRCQR). The active-site Proton donor; for delta-elimination activity is the Arg-286.

The protein belongs to the FPG family. As to quaternary structure, monomer. The cofactor is Zn(2+).

It carries out the reaction Hydrolysis of DNA containing ring-opened 7-methylguanine residues, releasing 2,6-diamino-4-hydroxy-5-(N-methyl)formamidopyrimidine.. The catalysed reaction is 2'-deoxyribonucleotide-(2'-deoxyribose 5'-phosphate)-2'-deoxyribonucleotide-DNA = a 3'-end 2'-deoxyribonucleotide-(2,3-dehydro-2,3-deoxyribose 5'-phosphate)-DNA + a 5'-end 5'-phospho-2'-deoxyribonucleoside-DNA + H(+). Its function is as follows. Involved in base excision repair of DNA damaged by oxidation or by mutagenic agents. Acts as a DNA glycosylase that recognizes and removes damaged bases. Has a preference for oxidized purines, such as 7,8-dihydro-8-oxoguanine (8-oxoG). Has AP (apurinic/apyrimidinic) lyase activity and introduces nicks in the DNA strand. Cleaves the DNA backbone by beta-delta elimination to generate a single-strand break at the site of the removed base with both 3'- and 5'-phosphates. This chain is Formamidopyrimidine-DNA glycosylase, found in Leifsonia xyli subsp. xyli (strain CTCB07).